Here is a 315-residue protein sequence, read N- to C-terminus: Probable serine acetyltransferase 4 (315 aa).

The interval 287 to 315 (AKPIIGKKAAPQRRPEELPGVTMEQRWSD) is disordered.

This sequence belongs to the transferase hexapeptide repeat family. In terms of assembly, homomultimer.

It carries out the reaction L-serine + acetyl-CoA = O-acetyl-L-serine + CoA. It participates in amino-acid biosynthesis; L-cysteine biosynthesis; L-cysteine from L-serine: step 1/2. This chain is Probable serine acetyltransferase 4 (SAT4), found in Oryza sativa subsp. japonica (Rice).